We begin with the raw amino-acid sequence, 221 residues long: Large ribosomal subunit protein uL3 (221 aa).

Belongs to the universal ribosomal protein uL3 family. As to quaternary structure, part of the 50S ribosomal subunit. Forms a cluster with proteins L14 and L19.

One of the primary rRNA binding proteins, it binds directly near the 3'-end of the 23S rRNA, where it nucleates assembly of the 50S subunit. This Chlamydia abortus (strain DSM 27085 / S26/3) (Chlamydophila abortus) protein is Large ribosomal subunit protein uL3.